We begin with the raw amino-acid sequence, 733 residues long: Hypermethylated in cancer 1 protein (733 aa).

The BTB domain maps to 47–110 (CDVIIVVQNA…IYTGRLTDSV (64 aa)). Positions 154-315 (KYCHLRGGGS…PFRGSGGSPG (162 aa)) are mediates HDAC-dependent transcriptional repression. R159 is modified (omega-N-methylarginine). The interval 189–209 (YSSPAGPPPPPAAEPPSGPDA) is disordered. The span at 193–206 (AGPPPPPAAEPPSG) shows a compositional bias: pro residues. S237 carries the post-translational modification Phosphoserine. An interaction with CTBP1 region spans residues 241–247 (GLDLSKK). Residues 241–421 (GLDLSKKSPP…PGGHLEGYPC (181 aa)) are disordered. S248 carries the phosphoserine modification. K333 carries the post-translational modification N6-acetyllysine; alternate. K333 participates in a covalent cross-link: Glycyl lysine isopeptide (Lys-Gly) (interchain with G-Cter in SUMO); alternate. The span at 344–361 (ELVRDRGSPGERLEERGG) shows a compositional bias: basic and acidic residues. S366 is subject to Phosphoserine. Residues 368–380 (GGPPLGLVPPPRY) show a composition bias toward pro residues. 5 consecutive C2H2-type zinc fingers follow at residues 437 to 464 (YVCI…EEEE), 507 to 534 (YRCA…LTRP), 535 to 562 (YPCT…GLKP), 563 to 590 (FACD…GEKP), and 591 to 618 (YECQ…VGGA). S704 is modified (phosphoserine).

Belongs to the krueppel C2H2-type zinc-finger protein family. Hic subfamily. Self-associates. Interacts with HIC2. Interacts with CTBP1 and CTBP2. Interacts with TCF7L2 and ARID1A. Interacts with MTA1 and MBD3; indicative for an association with the NuRD complex. Interacts with SIRT1. In terms of processing, acetylated on several residues, including Lys-333. Lys-333 is deacetylated by SIRT1. Sumoylated on Lys-333 by a PIAS family member, which enhances interaction with MTA1, positively regulates transcriptional repression activity and is enhanced by HDAC4. As to expression, ubiquitously expressed with highest levels in heart and lung.

It is found in the nucleus. Transcriptional repressor. Recognizes and binds to the consensus sequence '5-[CG]NG[CG]GGGCA[CA]CC-3'. May act as a tumor suppressor. Involved in development of head, face, limbs and ventral body wall. Involved in down-regulation of SIRT1 and thereby is involved in regulation of p53/TP53-dependent apoptotic DNA-damage responses. The specific target gene promoter association seems to be depend on corepressors, such as CTBP1 or CTBP2 and MTA1. In cooperation with MTA1 (indicative for an association with the NuRD complex) represses transcription from CCND1/cyclin-D1 and CDKN1C/p57Kip2 specifically in quiescent cells. Involved in regulation of the Wnt signaling pathway probably by association with TCF7L2 and preventing TCF7L2 and CTNNB1 association with promoters of TCF-responsive genes. Seems to repress transcription from E2F1 and ATOH1 which involves ARID1A, indicative for the participation of a distinct SWI/SNF-type chromatin-remodeling complex. Probably represses transcription from ACKR3, FGFBP1 and EFNA1. This chain is Hypermethylated in cancer 1 protein (Hic1), found in Mus musculus (Mouse).